The primary structure comprises 311 residues: Pyrimidine-specific ribonucleoside hydrolase RihA (311 aa).

Residue histidine 240 is part of the active site.

This sequence belongs to the IUNH family. RihA subfamily.

Functionally, hydrolyzes cytidine or uridine to ribose and cytosine or uracil, respectively. This Shigella flexneri serotype 5b (strain 8401) protein is Pyrimidine-specific ribonucleoside hydrolase RihA.